The sequence spans 213 residues: Kynurenine formamidase (213 aa).

Substrate is bound at residue tryptophan 18. Residues histidine 48, histidine 52, and aspartate 54 each contribute to the Zn(2+) site. Catalysis depends on histidine 58, which acts as the Proton donor/acceptor. 2 residues coordinate Zn(2+): histidine 160 and glutamate 172.

It belongs to the Cyclase 1 superfamily. KynB family. In terms of assembly, homodimer. Zn(2+) is required as a cofactor.

The enzyme catalyses N-formyl-L-kynurenine + H2O = L-kynurenine + formate + H(+). Its pathway is amino-acid degradation; L-tryptophan degradation via kynurenine pathway; L-kynurenine from L-tryptophan: step 2/2. In terms of biological role, catalyzes the hydrolysis of N-formyl-L-kynurenine to L-kynurenine, the second step in the kynurenine pathway of tryptophan degradation. The sequence is that of Kynurenine formamidase from Burkholderia lata (strain ATCC 17760 / DSM 23089 / LMG 22485 / NCIMB 9086 / R18194 / 383).